The primary structure comprises 1318 residues: DNA-directed RNA polymerase subunit beta' (1318 aa).

Residues cysteine 60, cysteine 62, cysteine 75, and cysteine 78 each coordinate Zn(2+). Mg(2+) contacts are provided by aspartate 535, aspartate 537, and aspartate 539. 4 residues coordinate Zn(2+): cysteine 890, cysteine 967, cysteine 974, and cysteine 977.

The protein belongs to the RNA polymerase beta' chain family. As to quaternary structure, the RNAP catalytic core consists of 2 alpha, 1 beta, 1 beta' and 1 omega subunit. When a sigma factor is associated with the core the holoenzyme is formed, which can initiate transcription. The cofactor is Mg(2+). Requires Zn(2+) as cofactor.

The enzyme catalyses RNA(n) + a ribonucleoside 5'-triphosphate = RNA(n+1) + diphosphate. DNA-dependent RNA polymerase catalyzes the transcription of DNA into RNA using the four ribonucleoside triphosphates as substrates. The sequence is that of DNA-directed RNA polymerase subunit beta' from Rhodococcus jostii (strain RHA1).